The following is a 332-amino-acid chain: Homeobox protein SIX3 (332 aa).

The segment at 72 to 119 (APPEELSMFQLPTLNFSPEQVASVCETLEETGDIERLGRFLWSLPVAP) is interaction with TLE5. A DNA-binding region (homeobox) is located at residues 206–265 (GEQKTHCFKERTRSLLREWYLQDPYPNPSKKRELAQATGLTPTQVGNWFKNRRQRDRAAA). The tract at residues 232-234 (NPS) is bind to RHO promoter. 2 disordered regions span residues 232–251 (NPSK…TQVG) and 258–332 (RQRD…ECDV). Positions 293–309 (SAESPSTAASPTTSVSS) are enriched in low complexity. Residues 316–332 (TGTSILSVTSSDSECDV) are compositionally biased toward polar residues.

It belongs to the SIX/Sine oculis homeobox family. Interacts with EYA4; translocates EYA4 from the cytoplasm to the nucleus and promotes activation of their target genes. Interacts with MTA1 and HDAC2; represses its own transcription. Interacts with MTA1; facilitates the binding of SIX3 to the core DNA motif of SIX3 promoter. Interacts with EYA1; promotes EYA1 translocation to the nucleus. Interacts with TLE1 and TLE5 (via Q domain); can act in combination with either TLE1 and/or TLE5 leading to transcriptional repression or activation, respectively. Interacts (via homeobox) with NR4A3; differentially regulates the transcriptional activities NR4A3. Interacts with GMNN. Interacts with TLE4.

It localises to the nucleus. In terms of biological role, transcriptional regulator which can act as both a transcriptional repressor and activator by binding a ATTA homeodomain core recognition sequence on these target genes. During forebrain development represses WNT1 expression allowing zona limitans intrathalamica formation and thereby ensuring proper anterio-posterior patterning of the diencephalon and formation of the rostral diencephalon. Acts as a direct upstream activator of SHH expression in the rostral diencephalon ventral midline and that in turn SHH maintains its expression. In addition, Six3 activity is required for the formation of the telencephalon. During postnatal stages of brain development is necessary for ependymal cell maturation by promoting the maturation of radial glia into ependymal cells through regulation of neuroblast proliferation and migration. Acts on the proliferation and differentiation of neural progenitor cells through activating transcription of CCND1 and CCND2. During early lens formation plays a role in lens induction and specification by activating directly PAX6 in the presumptive lens ectoderm. In turn PAX6 activates SIX3 resulting in activation of PDGFRA and CCND1 promoting cell proliferation. Also is required for the neuroretina development by directly suppressing WNT8B expression in the anterior neural plate territory. Its action during retina development and lens morphogenesis is TLE5 and TLE4-dependent manner. Furthermore, during eye development regulates several genes expression. Before and during early lens development represses the CRYGF promoter by binding a SIX repressor element. Directly activates RHO transcription, or cooperates with CRX or NRL. Six3 also functions in the formation of the proximodistal axis of the optic cup, and promotes the formation of optic vesicles-like structures. During pituitary development, acts in parallel or alternatively with HESX1 to control cell proliferation through Wnt/beta-catenin pathway. Plays a role in eye development by suppressing WNT1 expression and in dorsal-ventral patterning by repressing BMP signaling pathway. This chain is Homeobox protein SIX3 (SIX3), found in Homo sapiens (Human).